A 291-amino-acid polypeptide reads, in one-letter code: Exosome complex component RRP42 (291 aa).

Ala-2 is subject to N-acetylalanine. Lys-116 bears the N6-acetyllysine mark. Position 177 is a phosphoserine (Ser-177).

The protein belongs to the RNase PH family. In terms of assembly, component of the RNA exosome core complex (Exo-9), composed of EXOSC1, EXOSC2, EXOSC3, EXOSC4, EXOSC5, EXOSC6, EXOSC7, EXOSC8 and EXOSC9; within the complex interacts with EXOSC2 and EXOSC4. The catalytically inactive RNA exosome core complex (Exo-9) associates with the catalytic subunit EXOSC10/RRP6. Exo-9 may associate with DIS3 to form the nucleolar exosome complex, or DIS3L to form the cytoplasmic exosome complex. Exo-9 is formed by a hexameric base ring consisting of the heterodimers EXOSC4-EXOSC9, EXOSC5-EXOSC8 and EXOSC6-EXOSC7, and a cap ring consisting of EXOSC1, EXOSC2 and EXOSC3. The RNA exosome complex associates with cofactors C1D/RRP47, MPHOSPH6/MPP6 and MTREX/MTR4. Interacts with ZC3HAV1. Interacts with DIS3; the interaction is direct.

It is found in the nucleus. The protein localises to the nucleolus. Its subcellular location is the cytoplasm. Its function is as follows. Non-catalytic component of the RNA exosome complex which has 3'-&gt;5' exoribonuclease activity and participates in a multitude of cellular RNA processing and degradation events. In the nucleus, the RNA exosome complex is involved in proper maturation of stable RNA species such as rRNA, snRNA and snoRNA, in the elimination of RNA processing by-products and non-coding 'pervasive' transcripts, such as antisense RNA species and promoter-upstream transcripts (PROMPTs), and of mRNAs with processing defects, thereby limiting or excluding their export to the cytoplasm. The RNA exosome may be involved in Ig class switch recombination (CSR) and/or Ig variable region somatic hypermutation (SHM) by targeting AICDA deamination activity to transcribed dsDNA substrates. In the cytoplasm, the RNA exosome complex is involved in general mRNA turnover and specifically degrades inherently unstable mRNAs containing AU-rich elements (AREs) within their 3' untranslated regions, and in RNA surveillance pathways, preventing translation of aberrant mRNAs. It seems to be involved in degradation of histone mRNA. The catalytic inactive RNA exosome core complex of 9 subunits (Exo-9) is proposed to play a pivotal role in the binding and presentation of RNA for ribonucleolysis, and to serve as a scaffold for the association with catalytic subunits and accessory proteins or complexes. The sequence is that of Exosome complex component RRP42 (EXOSC7) from Homo sapiens (Human).